Here is a 126-residue protein sequence, read N- to C-terminus: Histone H2B.5 (126 aa).

Residues 1–27 (MAPKAEKKPSEKAPKADKKITKEGGSE) show a composition bias toward basic and acidic residues. The segment at 1 to 34 (MAPKAEKKPSEKAPKADKKITKEGGSERKKKTKK) is disordered. Ala2 is modified (n,N,N-trimethylalanine; alternate). Ala2 is subject to N,N-dimethylalanine; alternate. Ala2 carries the post-translational modification N-methylalanine; alternate. The residue at position 4 (Lys4) is an N6-methyllysine. An N6-acetyllysine mark is found at Lys7, Lys12, Lys18, and Lys19. Residue Lys122 forms a Glycyl lysine isopeptide (Lys-Gly) (interchain with G-Cter in ubiquitin) linkage.

Belongs to the histone H2B family. In terms of assembly, the nucleosome is a histone octamer containing two molecules each of H2A, H2B, H3 and H4 assembled in one H3-H4 heterotetramer and two H2A-H2B heterodimers. The octamer wraps approximately 147 bp of DNA. Can be acetylated to form H2BK6ac, H2BK33ac and H2BK34ac. In terms of processing, monoubiquitinated by BRE1 to form H2BK143ub1 and deubiquitinated by UBP26. Required for heterochromatic histone H3 di- and trimethylation at H3K4me. May give a specific tag for epigenetic transcriptional activation.

It is found in the nucleus. The protein resides in the chromosome. Functionally, core component of nucleosome. Nucleosomes wrap and compact DNA into chromatin, limiting DNA accessibility to the cellular machineries which require DNA as a template. Histones thereby play a central role in transcription regulation, DNA repair, DNA replication and chromosomal stability. DNA accessibility is regulated via a complex set of post-translational modifications of histones, also called histone code, and nucleosome remodeling. This is Histone H2B.5 from Arabidopsis thaliana (Mouse-ear cress).